A 452-amino-acid chain; its full sequence is Maltoporin (452 aa).

Positions 1-25 are cleaved as a signal peptide; that stretch reads MMITLRKLPLAVAVAAGVMSAQAMA.

The protein belongs to the porin LamB (TC 1.B.3) family. Homotrimer formed of three 18-stranded antiparallel beta-barrels, containing three independent channels.

Its subcellular location is the cell outer membrane. The catalysed reaction is beta-maltose(in) = beta-maltose(out). In terms of biological role, involved in the transport of maltose and maltodextrins. The polypeptide is Maltoporin (Salmonella agona (strain SL483)).